We begin with the raw amino-acid sequence, 467 residues long: ATP synthase subunit beta (467 aa).

156–163 (GGAGVGKT) serves as a coordination point for ATP.

It belongs to the ATPase alpha/beta chains family. In terms of assembly, F-type ATPases have 2 components, CF(1) - the catalytic core - and CF(0) - the membrane proton channel. CF(1) has five subunits: alpha(3), beta(3), gamma(1), delta(1), epsilon(1). CF(0) has three main subunits: a(1), b(2) and c(9-12). The alpha and beta chains form an alternating ring which encloses part of the gamma chain. CF(1) is attached to CF(0) by a central stalk formed by the gamma and epsilon chains, while a peripheral stalk is formed by the delta and b chains.

It localises to the cell inner membrane. The enzyme catalyses ATP + H2O + 4 H(+)(in) = ADP + phosphate + 5 H(+)(out). Produces ATP from ADP in the presence of a proton gradient across the membrane. The catalytic sites are hosted primarily by the beta subunits. This chain is ATP synthase subunit beta, found in Cupriavidus taiwanensis (strain DSM 17343 / BCRC 17206 / CCUG 44338 / CIP 107171 / LMG 19424 / R1) (Ralstonia taiwanensis (strain LMG 19424)).